The following is an 860-amino-acid chain: RNA-dependent RNA polymerase (860 aa).

A disordered region spans residues 839 to 860; sequence PFSSSESDEPRAKEIGPNRGPE. The segment covering 846–860 has biased composition (basic and acidic residues); the sequence is DEPRAKEIGPNRGPE.

The protein belongs to the ssRNA positive-strand viruses RNA-directed RNA polymerase family.

It catalyses the reaction RNA(n) + a ribonucleoside 5'-triphosphate = RNA(n+1) + diphosphate. RNA-dependent RNA polymerase which replicates the viral genome. The chain is RNA-dependent RNA polymerase from Ourmia melon virus (isolate Melon/Iran/VE9) (OuMV).